The sequence spans 880 residues: Probable LRR receptor-like serine/threonine-protein kinase At2g28960 (880 aa).

An N-terminal signal peptide occupies residues 1 to 24 (MEGRRQRLLVFIFGALAITHLVQA). The Extracellular portion of the chain corresponds to 25-511 (QPPDQRGFIS…NNNNQTYIVP (487 aa)). Residues Asn-180, Asn-201, Asn-228, Asn-254, Asn-287, Asn-403, Asn-430, and Asn-441 are each glycosylated (N-linked (GlcNAc...) asparagine). 3 LRR repeats span residues 409–430 (RIIS…AFQN), 433–455 (ELRK…LASM), and 457–476 (SLSI…PKLL). An N-linked (GlcNAc...) asparagine glycan is attached at Asn-505. A helical membrane pass occupies residues 512–532 (VVASVASVLIIIAVLILILVF). Residues 533–880 (KKRRPTQVDS…FTTEINPKAR (348 aa)) lie on the Cytoplasmic side of the membrane. Thr-564 carries the phosphothreonine modification. Residues 573-846 (DNFERVLGEG…QVTNELKQCL (274 aa)) form the Protein kinase domain. Residues 579-587 (LGEGGFGVV) and Lys-601 contribute to the ATP site. Tyr-646 carries the phosphotyrosine modification. Residue Asp-698 is the Proton acceptor of the active site. The residue at position 732 (Ser-732) is a Phosphoserine. 2 positions are modified to phosphothreonine: Thr-733 and Thr-738. At Tyr-746 the chain carries Phosphotyrosine. Residues 854–880 (GVREDMGSRSSVEMSTSFTTEINPKAR) are disordered. Over residues 861 to 880 (SRSSVEMSTSFTTEINPKAR) the composition is skewed to polar residues.

It belongs to the protein kinase superfamily. Ser/Thr protein kinase family.

It localises to the membrane. It carries out the reaction L-seryl-[protein] + ATP = O-phospho-L-seryl-[protein] + ADP + H(+). The enzyme catalyses L-threonyl-[protein] + ATP = O-phospho-L-threonyl-[protein] + ADP + H(+). In Arabidopsis thaliana (Mouse-ear cress), this protein is Probable LRR receptor-like serine/threonine-protein kinase At2g28960.